The primary structure comprises 149 residues: 3-hydroxyacyl-[acyl-carrier-protein] dehydratase FabZ (149 aa).

His-47 is a catalytic residue.

This sequence belongs to the thioester dehydratase family. FabZ subfamily.

It localises to the cytoplasm. It catalyses the reaction a (3R)-hydroxyacyl-[ACP] = a (2E)-enoyl-[ACP] + H2O. Its function is as follows. Involved in unsaturated fatty acids biosynthesis. Catalyzes the dehydration of short chain beta-hydroxyacyl-ACPs and long chain saturated and unsaturated beta-hydroxyacyl-ACPs. This Thioalkalivibrio sulfidiphilus (strain HL-EbGR7) protein is 3-hydroxyacyl-[acyl-carrier-protein] dehydratase FabZ.